Consider the following 560-residue polypeptide: Protein DETOXIFICATION 45, chloroplastic (560 aa).

The transit peptide at 1–75 (MESSRVVVGG…QTNPDCGVVK (75 aa)) directs the protein to the chloroplast. 12 consecutive transmembrane segments (helical) span residues 109-129 (LVMLSLPAIAGQAIDPLTLLM), 147-167 (VSMAIFNTISKLFNIPLLSVA), 209-229 (ALVLAIGIGIFEALALSLASG), 250-270 (FLVLRALGAPAYVVSLALQGI), 280-300 (PVYCLGIGNFLAVFLFPLFIY), 308-328 (GAAISSVISQYTVAILMLILL), 353-373 (FVLGRTLSVLVTMTVATSMAA), 389-411 (VWLAVSLLTDALASSGQALIASS), 426-446 (FVLKIGVVTGIALAIVLGMSF), 466-486 (GVLFVAATQPITALAFIFDGL), 495-515 (YAACSMMVVGGISSAFMLYAP), and 523-543 (VWVGLSMFMGLRMVAGFSRLM).

Belongs to the multi antimicrobial extrusion (MATE) (TC 2.A.66.1) family. As to expression, ubiquitous.

The protein localises to the plastid. Its subcellular location is the chloroplast membrane. The sequence is that of Protein DETOXIFICATION 45, chloroplastic from Arabidopsis thaliana (Mouse-ear cress).